The chain runs to 351 residues: MTGIIAAAGISLLVSFLLLPPLIRILYRFKFGQEIRDDGPQGHKTKQGTPTMGGIAIIFGTVVGYFGAHAVTMTPPTVSGVLVILLFVGLGCVGFLDDFIKIYKRRSLGLRSGAKMLGQIIVGVGFAIGVTMFPNSYTYTPGSTHLSLLRDFGPPMAVWLFVIWALLLIVATSNAVNLTDGLDGLATGATILSLVAYVIIGNWQLRQSCINALEPNCYTVRDPLDLAVVAAAALGGCIAFLWFNAPPAKIFMGDTGSLALGGLLVGLAITTRTQLLLLVIGGLFVLITASVIIQVGSFRLTGKRVFRMAPLQHHFELKGWAETTIVIRFWIIQGLFVAAAMALFYLEWMPR.

Transmembrane regions (helical) follow at residues 3–23, 51–71, 76–96, 113–133, 152–172, 181–201, 223–243, 250–270, 275–295, and 329–349; these read GIIA…PPLI, TMGG…AHAV, PTVS…VGFL, GAKM…VTMF, FGPP…IVAT, GLDG…VIIG, PLDL…FLWF, IFMG…LAIT, LLLL…IIQV, and FWII…LEWM.

The protein belongs to the glycosyltransferase 4 family. MraY subfamily. Requires Mg(2+) as cofactor.

Its subcellular location is the cell membrane. It catalyses the reaction UDP-N-acetyl-alpha-D-muramoyl-L-alanyl-gamma-D-glutamyl-meso-2,6-diaminopimeloyl-D-alanyl-D-alanine + di-trans,octa-cis-undecaprenyl phosphate = di-trans,octa-cis-undecaprenyl diphospho-N-acetyl-alpha-D-muramoyl-L-alanyl-D-glutamyl-meso-2,6-diaminopimeloyl-D-alanyl-D-alanine + UMP. Its pathway is cell wall biogenesis; peptidoglycan biosynthesis. In terms of biological role, catalyzes the initial step of the lipid cycle reactions in the biosynthesis of the cell wall peptidoglycan: transfers peptidoglycan precursor phospho-MurNAc-pentapeptide from UDP-MurNAc-pentapeptide onto the lipid carrier undecaprenyl phosphate, yielding undecaprenyl-pyrophosphoryl-MurNAc-pentapeptide, known as lipid I. The protein is Phospho-N-acetylmuramoyl-pentapeptide-transferase of Thermobifida fusca (strain YX).